The following is a 418-amino-acid chain: Alpha-1-antitrypsin (418 aa).

Positions 1–24 (MPSSVSWGILLLAGLCCLVPVSLA) are cleaved as a signal peptide. Serine 38 carries the post-translational modification Phosphoserine. 3 N-linked (GlcNAc...) asparagine glycosylation sites follow: asparagine 70, asparagine 107, and asparagine 271. The tract at residues 373 to 392 (GAMFLEAIPMSIPPEVKFNK) is RCL. Serine 383 carries the post-translational modification Phosphoserine.

Belongs to the serpin family. Interacts with CELA2A. Interacts with ERGIC3 and LMAN1/ERGIC53. Interacts with PRSS1/Trypsin. Plasma.

It localises to the secreted. Functionally, inhibitor of serine proteases. Its primary target is elastase, but it also has a moderate affinity for plasmin and thrombin. Inhibits trypsin, chymotrypsin and plasminogen activator. This chain is Alpha-1-antitrypsin (SERPINA1), found in Pongo abelii (Sumatran orangutan).